The primary structure comprises 124 residues: Probable cytochrome b5 1 (124 aa).

The Cytochrome b5 heme-binding domain occupies 3–79 (VKYFEPEEIV…LEEMYIGDLK (77 aa)). The heme site is built by His38 and His62. The chain crosses the membrane as a helical span at residues 100–120 (PPLPLLIALIVLPAIAVIVFV).

This sequence belongs to the cytochrome b5 family.

Its subcellular location is the endoplasmic reticulum membrane. The protein resides in the microsome membrane. Its function is as follows. Membrane bound hemoprotein which function as an electron carrier for several membrane bound oxygenases. The chain is Probable cytochrome b5 1 from Schizosaccharomyces pombe (strain 972 / ATCC 24843) (Fission yeast).